Consider the following 151-residue polypeptide: Immunity protein YezG (151 aa).

Positions lysine 62–valine 90 form a coiled coil.

Interacts with cognate toxin YeeF but not with non-cognate toxin YobL. The interaction probably inhibits the toxic activity of YeeF. May bind with a stoichiometry of 2:2 to YeeF.

It localises to the cytoplasm. Immunity component of one of 6 LXG toxin-immunity modules in this strain. They promote kin selection, mediate competition in biofilms, and drive spatial segregation of different strains, indicating that LXG toxins may help avoid warfare between strains in biofilms. Mediates intercellular competition during biofilm formation; disruption of the operon disadvantages the bacteria, but overexpression of the cognate immunity protein restores growth in competition with wild-type. In situ neutralizes the toxic effect of cognate toxin YeeF. Probably neutralizes the ability to inhibit growth of cognate toxin YeeF. Probably does not have immunity protein activity on other LXG toxins. The chain is Immunity protein YezG (yezG) from Bacillus subtilis (strain 168).